Here is a 145-residue protein sequence, read N- to C-terminus: Small ribosomal subunit protein eS19 (145 aa).

Lys-23 bears the N6-acetyllysine mark. Arg-67 carries the post-translational modification Omega-N-methylarginine. 2 positions are modified to N6-acetyllysine: Lys-111 and Lys-115. N6-succinyllysine is present on Lys-143.

It belongs to the eukaryotic ribosomal protein eS19 family. As to quaternary structure, component of the small ribosomal subunit. Part of the small subunit (SSU) processome, composed of more than 70 proteins and the RNA chaperone small nucleolar RNA (snoRNA) U3. Interacts with RPS19BP1; the interaction is direct and mediates the integration of RPS19 in state post-A1. Interacts with RPS19BP1.

It is found in the cytoplasm. It localises to the nucleus. Its subcellular location is the nucleolus. Functionally, component of the small ribosomal subunit. The ribosome is a large ribonucleoprotein complex responsible for the synthesis of proteins in the cell. Required for pre-rRNA processing and maturation of 40S ribosomal subunits. Part of the small subunit (SSU) processome, first precursor of the small eukaryotic ribosomal subunit. During the assembly of the SSU processome in the nucleolus, many ribosome biogenesis factors, an RNA chaperone and ribosomal proteins associate with the nascent pre-rRNA and work in concert to generate RNA folding, modifications, rearrangements and cleavage as well as targeted degradation of pre-ribosomal RNA by the RNA exosome. The polypeptide is Small ribosomal subunit protein eS19 (RPS19) (Oryctolagus cuniculus (Rabbit)).